Reading from the N-terminus, the 92-residue chain is Transcription factor S4 (92 aa).

Residues 1–31 are ZR-N; the sequence is MRFCPKCGSFLKVKGNKMVCSKCGYSDHDVE. Zn(2+) contacts are provided by Cys-4, Cys-7, Cys-20, and Cys-23. Positions 32–56 are flexible linker; it reads KVILKENVAHENDKTIIADGETIEG. Residues 55–92 are ZR-C; that stretch reads EGRVAISLCPRCGSVRAILLNKKKRLYRCMTCNFVYNI. Cys-63 and Cys-66 together coordinate Zn(2+). Residues Lys-76, Lys-77, and Lys-78 contribute to the active site. Positions 83 and 86 each coordinate Zn(2+).

Belongs to the archaeal RpoM/eukaryotic RPA12/RPB9/RPC11 RNA polymerase family. In terms of assembly, interacts with RNA polymerase. Zn(2+) serves as cofactor.

Functionally, a potent inhibitor of RNA polymerase (RNAP) probably involved in viral defense. Destabilizes the transcription pre-initiation complex of TBP, TFB, DNA and RNAP, inhibits abortive transcription initiation, productive initiation and transcription elongation. Increases the RNAP KM for NTPs about 50-fold. Overexpression of TFS1-tip4 (TFS1 with the active tip of this protein, phenocopies this protein) in S.acidocaldarius MW001 leads to severe growth inhibition. When bound to RNAP induces conformational changes that widen the DNA-binding channel, probably destabilizing the interaction of DNA with RNAP. The chain is Transcription factor S4 from Saccharolobus solfataricus (strain ATCC 35092 / DSM 1617 / JCM 11322 / P2) (Sulfolobus solfataricus).